We begin with the raw amino-acid sequence, 459 residues long: Chromosomal replication initiator protein DnaA (459 aa).

Residues 1–74 (MQKIETFWHF…DEMAQDHFNE (74 aa)) form a domain I, interacts with DnaA modulators region. The segment at 74-122 (ERISFRLELREPAESEAQTVRTSAQKNREDKKPAAEKTQGVTSRKTNPS) is domain II. The tract at residues 87–122 (ESEAQTVRTSAQKNREDKKPAAEKTQGVTSRKTNPS) is disordered. Residues 89–98 (EAQTVRTSAQ) are compositionally biased toward polar residues. Positions 99 to 108 (KNREDKKPAA) are enriched in basic and acidic residues. A compositionally biased stretch (polar residues) spans 112-122 (QGVTSRKTNPS). The domain III, AAA+ region stretch occupies residues 123 to 339 (QLNASFTFDA…GALKRVLAFS (217 aa)). Positions 167, 169, 170, and 171 each coordinate ATP. The interval 340–459 (RFTGHSISLD…FNALMHILRG (120 aa)) is domain IV, binds dsDNA.

Belongs to the DnaA family. In terms of assembly, oligomerizes as a right-handed, spiral filament on DNA at oriC.

It is found in the cytoplasm. In terms of biological role, plays an essential role in the initiation and regulation of chromosomal replication. ATP-DnaA binds to the origin of replication (oriC) to initiate formation of the DNA replication initiation complex once per cell cycle. Binds the DnaA box (a 9 base pair repeat at the origin) and separates the double-stranded (ds)DNA. Forms a right-handed helical filament on oriC DNA; dsDNA binds to the exterior of the filament while single-stranded (ss)DNA is stabiized in the filament's interior. The ATP-DnaA-oriC complex binds and stabilizes one strand of the AT-rich DNA unwinding element (DUE), permitting loading of DNA polymerase. After initiation quickly degrades to an ADP-DnaA complex that is not apt for DNA replication. Binds acidic phospholipids. The sequence is that of Chromosomal replication initiator protein DnaA from Nitrosomonas europaea (strain ATCC 19718 / CIP 103999 / KCTC 2705 / NBRC 14298).